Consider the following 444-residue polypeptide: Proline--tRNA ligase (444 aa).

This sequence belongs to the class-II aminoacyl-tRNA synthetase family. ProS type 2 subfamily. As to quaternary structure, homodimer.

The protein localises to the cytoplasm. The catalysed reaction is tRNA(Pro) + L-proline + ATP = L-prolyl-tRNA(Pro) + AMP + diphosphate. Its function is as follows. Catalyzes the attachment of proline to tRNA(Pro) in a two-step reaction: proline is first activated by ATP to form Pro-AMP and then transferred to the acceptor end of tRNA(Pro). The polypeptide is Proline--tRNA ligase (Maricaulis maris (strain MCS10) (Caulobacter maris)).